Here is a 113-residue protein sequence, read N- to C-terminus: Nucleoid-associated protein Athe_1143 (113 aa).

Belongs to the YbaB/EbfC family. As to quaternary structure, homodimer.

The protein resides in the cytoplasm. Its subcellular location is the nucleoid. In terms of biological role, binds to DNA and alters its conformation. May be involved in regulation of gene expression, nucleoid organization and DNA protection. This is Nucleoid-associated protein Athe_1143 from Caldicellulosiruptor bescii (strain ATCC BAA-1888 / DSM 6725 / KCTC 15123 / Z-1320) (Anaerocellum thermophilum).